Reading from the N-terminus, the 229-residue chain is Translation initiation factor IF-3 (229 aa).

Disordered regions lie at residues 1-21 (MAIQ…TNRR) and 184-229 (QAQR…AGPR). Residues 192–203 (AAAQAAPAAAPQ) show a composition bias toward low complexity. Pro residues predominate over residues 204–221 (PGAPAAPPAAPAPAPAPE).

This sequence belongs to the IF-3 family. In terms of assembly, monomer.

The protein resides in the cytoplasm. In terms of biological role, IF-3 binds to the 30S ribosomal subunit and shifts the equilibrium between 70S ribosomes and their 50S and 30S subunits in favor of the free subunits, thus enhancing the availability of 30S subunits on which protein synthesis initiation begins. The protein is Translation initiation factor IF-3 of Anaeromyxobacter sp. (strain Fw109-5).